The chain runs to 58 residues: Sodium/potassium-transporting ATPase subunit gamma (58 aa).

The chain crosses the membrane as a helical span at residues 20–39 (NGGLIFAALAFIVGLVIILS).

This sequence belongs to the FXYD family. As to quaternary structure, regulatory subunit of the sodium/potassium-transporting ATPase which is composed of a catalytic alpha subunit, an auxiliary non-catalytic beta subunit and an additional regulatory subunit. As to expression, highest levels expressed in the kidney and spleen. Restricted to the basolateral membrane in renal epithelial cells and varies in its level of expression along the nephron.

The protein resides in the membrane. Its function is as follows. May be involved in forming the receptor site for cardiac glycoside binding or may modulate the transport function of the sodium ATPase. The polypeptide is Sodium/potassium-transporting ATPase subunit gamma (FXYD2) (Bos taurus (Bovine)).